The primary structure comprises 74 residues: UPF0291 protein EF_0064 (74 aa).

The segment at 53 to 74 (YDPTGEDVTPEKLKEEQQKYFD) is disordered. The segment covering 61–74 (TPEKLKEEQQKYFD) has biased composition (basic and acidic residues).

This sequence belongs to the UPF0291 family.

The protein resides in the cytoplasm. The sequence is that of UPF0291 protein EF_0064 from Enterococcus faecalis (strain ATCC 700802 / V583).